Consider the following 1282-residue polypeptide: Clustered mitochondria protein homolog (1282 aa).

Residues 1 to 43 form a disordered region; it reads MEQNNGTTEHPKEVLDQTNPSNEVTGVPNGNHAEGEGDQNAGE. The region spanning 341 to 585 is the Clu domain; the sequence is DITRPQENYL…RITPLDVLWY (245 aa). Basic and acidic residues-rich tracts occupy residues 631–641 and 653–669; these read EAEEKAEESKP and ESEKKETTSPDQERVDI. Disordered regions lie at residues 631 to 669 and 892 to 936; these read EAEEKAEESKPNGEAADASENAESEKKETTSPDQERVDI and RSQL…PAPA. The segment covering 924 to 936 has biased composition (low complexity); the sequence is QASPRPAQSPAPA. The stretch at 1003–1036 is one TPR repeat; the sequence is AKLYHQLSMLYYQSDDKDAAVELARKAVIVTERT. Positions 1202–1282 are disordered; that stretch reads ANLPTRLGTK…SKQSTVKPSS (81 aa). Over residues 1212–1223 the composition is skewed to polar residues; the sequence is PQPQVGQTTSEM. The segment covering 1257 to 1272 has biased composition (basic residues); that stretch reads TKQKKRAAARNPKLRG. A compositionally biased stretch (polar residues) spans 1273 to 1282; the sequence is SKQSTVKPSS.

Belongs to the CLU family. May associate with the eukaryotic translation initiation factor 3 (eIF-3) complex.

It is found in the cytoplasm. Its function is as follows. mRNA-binding protein involved in proper cytoplasmic distribution of mitochondria. The polypeptide is Clustered mitochondria protein homolog (Coccidioides immitis (strain RS) (Valley fever fungus)).